The primary structure comprises 481 residues: Dynein axonemal assembly factor 8 (481 aa).

Disordered regions lie at residues 70–91, 131–233, 306–397, and 415–454; these read DESGTWVTAGRSPSPEPLLVPG, LDTK…EGRP, TWKV…PVAS, and RAFRKGAVPPQLSAKDGPGGQKDQAQEDTGGSQTQRKKHI. Phosphoserine occurs at positions 83, 145, and 147. The segment covering 144 to 155 has biased composition (polar residues); sequence GSQSPPWSSQGE. Over residues 163–176 the composition is skewed to basic and acidic residues; the sequence is GKLKTEPSDTDFKN. Over residues 177–188 the composition is skewed to basic residues; that stretch reads SAKRRALRRERR. A compositionally biased stretch (polar residues) spans 198–211; sequence KVTQAAQNPASGDQ. A compositionally biased stretch (basic and acidic residues) spans 310-322; sequence SADKLQDTEEQVA. Residues 323-336 show a composition bias toward polar residues; the sequence is RTRSASAESGFQTE. Residue serine 328 is modified to Phosphoserine. 2 stretches are compositionally biased toward basic and acidic residues: residues 337–349 and 359–380; these read RVQKRAESRRLKT and RLTEPSDPQEHQSQESSEHSSS.

Its subcellular location is the dynein axonemal particle. It localises to the cytoplasm. Its function is as follows. In cyliated cells, dynein axonemal particle-specific protein required for deployment of ODA to the axoneme. Interacts with outer dynein arm (ODA) subunits. The sequence is that of Dynein axonemal assembly factor 8 (Dnaaf8) from Rattus norvegicus (Rat).